A 137-amino-acid chain; its full sequence is Large ribosomal subunit protein uL16 (137 aa).

The protein belongs to the universal ribosomal protein uL16 family. As to quaternary structure, part of the 50S ribosomal subunit.

Functionally, binds 23S rRNA and is also seen to make contacts with the A and possibly P site tRNAs. The protein is Large ribosomal subunit protein uL16 of Sinorhizobium medicae (strain WSM419) (Ensifer medicae).